Here is a 228-residue protein sequence, read N- to C-terminus: Chromatin remodeling protein SHL (228 aa).

A BAH domain is found at 21-137; it reads KSIQEGDAVL…STTGAFDPDR (117 aa). A PHD-type zinc finger spans residues 139-190; that stretch reads TVFCKCEMPYNPDDLMVQCEECSEWFHPSCIGTTIEEAKKPDNFYCEECSPQ. The segment covering 191–203 has biased composition (polar residues); the sequence is QQNLHNSNSTSNN. The disordered stretch occupies residues 191–228; sequence QQNLHNSNSTSNNRDAKVNGKRSLEVTKSKNKHTKRPG. Residues 204–218 are compositionally biased toward basic and acidic residues; the sequence is RDAKVNGKRSLEVTK. Positions 210–217 match the Nuclear localization signal motif; that stretch reads GKRSLEVT. A compositionally biased stretch (basic residues) spans 219–228; that stretch reads SKNKHTKRPG.

The protein belongs to the SHL1/EBS protein family. In terms of assembly, recognizes di- and trimethylated histone H3 at lysine 4. Interacts with HDA6. Interacts with DEK3. In terms of tissue distribution, expressed ubiquitously. Mostly expressed in roots, stems, leaves and flowers, and, to a lower extent, in siliques.

It is found in the nucleus. Chromatin remodeling factor that binds to methylated histone (e.g. H3K4me2/3) to prevent their acetylation (e.g. H3K9K14Ac), likely by recruiting histone deacetylase (HDAC) complexes, and thus regulate the transcription of target genes. Required during development and for fertility, probably by modulating developmental gene expression. Promotes development speed, but at fitness cost. Involved in the chromatin-mediated repression of floral initiation and controls genes regulating flowering. Negatively regulates the expression of the floral integrator SOC1, by preventing high levels of H3 acetylation, thus maintaining an inactive chromatin conformation. In Arabidopsis thaliana (Mouse-ear cress), this protein is Chromatin remodeling protein SHL.